We begin with the raw amino-acid sequence, 365 residues long: 2-aminoethylphosphonate--pyruvate transaminase (365 aa).

Lysine 194 is modified (N6-(pyridoxal phosphate)lysine).

It belongs to the class-V pyridoxal-phosphate-dependent aminotransferase family. PhnW subfamily. As to quaternary structure, homodimer. It depends on pyridoxal 5'-phosphate as a cofactor.

The catalysed reaction is (2-aminoethyl)phosphonate + pyruvate = phosphonoacetaldehyde + L-alanine. Functionally, involved in phosphonate degradation. This chain is 2-aminoethylphosphonate--pyruvate transaminase, found in Bacillus cereus (strain AH187).